Consider the following 89-residue polypeptide: Small ribosomal subunit protein uS14 (89 aa).

This sequence belongs to the universal ribosomal protein uS14 family. Part of the 30S ribosomal subunit. Contacts proteins S3 and S10.

Binds 16S rRNA, required for the assembly of 30S particles and may also be responsible for determining the conformation of the 16S rRNA at the A site. This Chlorobium phaeobacteroides (strain BS1) protein is Small ribosomal subunit protein uS14.